The primary structure comprises 560 residues: DNA ligase B (560 aa).

Lysine 124 (N6-AMP-lysine intermediate) is an active-site residue.

It belongs to the NAD-dependent DNA ligase family. LigB subfamily.

It carries out the reaction NAD(+) + (deoxyribonucleotide)n-3'-hydroxyl + 5'-phospho-(deoxyribonucleotide)m = (deoxyribonucleotide)n+m + AMP + beta-nicotinamide D-nucleotide.. In terms of biological role, catalyzes the formation of phosphodiester linkages between 5'-phosphoryl and 3'-hydroxyl groups in double-stranded DNA using NAD as a coenzyme and as the energy source for the reaction. In Escherichia coli O157:H7, this protein is DNA ligase B.